A 414-amino-acid chain; its full sequence is 2,3-diketo-5-methylthiopentyl-1-phosphate enolase (414 aa).

Catalysis depends on Lys99, which acts as the Proton acceptor. Residues Lys148, 174–177, His265, Gly338, and 360–361 each bind substrate; these read KDDE and GG. 3 residues coordinate Mg(2+): Lys174, Asp176, and Glu177. Lys174 is subject to N6-carboxylysine.

It belongs to the RuBisCO large chain family. Type IV subfamily. Homodimer. Mg(2+) is required as a cofactor.

It catalyses the reaction 5-methylsulfanyl-2,3-dioxopentyl phosphate = 2-hydroxy-5-methylsulfanyl-3-oxopent-1-enyl phosphate. It functions in the pathway amino-acid biosynthesis; L-methionine biosynthesis via salvage pathway; L-methionine from S-methyl-5-thio-alpha-D-ribose 1-phosphate: step 3/6. In terms of biological role, catalyzes the enolization of 2,3-diketo-5-methylthiopentyl-1-phosphate (DK-MTP-1-P) into 2-hydroxy-3-keto-5-methylthiopentenyl-1-phosphate (HK-MTPenyl-1-P). The sequence is that of 2,3-diketo-5-methylthiopentyl-1-phosphate enolase from Bacillus cereus (strain ZK / E33L).